The chain runs to 306 residues: Ribonuclease Z (306 aa).

Residues histidine 63, histidine 65, aspartate 67, histidine 68, histidine 141, aspartate 211, and histidine 269 each contribute to the Zn(2+) site. The active-site Proton acceptor is the aspartate 67.

Belongs to the RNase Z family. In terms of assembly, homodimer. The cofactor is Zn(2+).

It catalyses the reaction Endonucleolytic cleavage of RNA, removing extra 3' nucleotides from tRNA precursor, generating 3' termini of tRNAs. A 3'-hydroxy group is left at the tRNA terminus and a 5'-phosphoryl group is left at the trailer molecule.. In terms of biological role, zinc phosphodiesterase, which displays some tRNA 3'-processing endonuclease activity. Probably involved in tRNA maturation, by removing a 3'-trailer from precursor tRNA. This Staphylococcus saprophyticus subsp. saprophyticus (strain ATCC 15305 / DSM 20229 / NCIMB 8711 / NCTC 7292 / S-41) protein is Ribonuclease Z.